Here is a 216-residue protein sequence, read N- to C-terminus: 3-keto-L-gulonate-6-phosphate decarboxylase UlaD (216 aa).

Asp11 contacts substrate. Residues Glu33 and Asp62 each contribute to the Mg(2+) site. Residue Arg192 coordinates substrate.

This sequence belongs to the HPS/KGPDC family. KGPDC subfamily. In terms of assembly, homodimer. Requires Mg(2+) as cofactor.

The catalysed reaction is 3-dehydro-L-gulonate 6-phosphate + H(+) = L-xylulose 5-phosphate + CO2. It participates in cofactor degradation; L-ascorbate degradation; D-xylulose 5-phosphate from L-ascorbate: step 2/4. Catalyzes the decarboxylation of 3-keto-L-gulonate-6-P into L-xylulose-5-P. Is involved in the anaerobic L-ascorbate utilization. The chain is 3-keto-L-gulonate-6-phosphate decarboxylase UlaD from Escherichia coli O139:H28 (strain E24377A / ETEC).